The sequence spans 98 residues: NADH-ubiquinone oxidoreductase chain 4L (98 aa).

The next 3 helical transmembrane spans lie at 2-22 (PSIS…MLIF), 29-49 (SLLC…LTIL), and 61-81 (ILLL…LVTV).

Belongs to the complex I subunit 4L family. Core subunit of respiratory chain NADH dehydrogenase (Complex I) which is composed of 45 different subunits.

Its subcellular location is the mitochondrion inner membrane. The enzyme catalyses a ubiquinone + NADH + 5 H(+)(in) = a ubiquinol + NAD(+) + 4 H(+)(out). Core subunit of the mitochondrial membrane respiratory chain NADH dehydrogenase (Complex I) which catalyzes electron transfer from NADH through the respiratory chain, using ubiquinone as an electron acceptor. Part of the enzyme membrane arm which is embedded in the lipid bilayer and involved in proton translocation. The protein is NADH-ubiquinone oxidoreductase chain 4L (MT-ND4L) of Eulemur mongoz (Mongoose lemur).